We begin with the raw amino-acid sequence, 432 residues long: Adenylosuccinate synthetase (432 aa).

Residues 12–18 (GDEGKGK) and 40–42 (GHT) each bind GTP. Aspartate 13 serves as the catalytic Proton acceptor. Aspartate 13 and glycine 40 together coordinate Mg(2+). IMP is bound by residues 13–16 (DEGK), 38–41 (NAGH), threonine 128, arginine 142, glutamine 223, threonine 238, and arginine 302. The active-site Proton donor is the histidine 41. 298 to 304 (TTTGRPR) is a substrate binding site. GTP contacts are provided by residues arginine 304, 330–332 (HLD), and 417–419 (GVG).

The protein belongs to the adenylosuccinate synthetase family. In terms of assembly, homodimer. Requires Mg(2+) as cofactor.

The protein localises to the cytoplasm. The enzyme catalyses IMP + L-aspartate + GTP = N(6)-(1,2-dicarboxyethyl)-AMP + GDP + phosphate + 2 H(+). It participates in purine metabolism; AMP biosynthesis via de novo pathway; AMP from IMP: step 1/2. In terms of biological role, plays an important role in the de novo pathway of purine nucleotide biosynthesis. Catalyzes the first committed step in the biosynthesis of AMP from IMP. This Symbiobacterium thermophilum (strain DSM 24528 / JCM 14929 / IAM 14863 / T) protein is Adenylosuccinate synthetase.